We begin with the raw amino-acid sequence, 831 residues long: Translation initiation factor IF-2 (831 aa).

The span at 1 to 11 (MADEIKKENAP) shows a compositional bias: basic and acidic residues. The interval 1 to 236 (MADEIKKENA…GKHAKKASAL (236 aa)) is disordered. The span at 22 to 31 (TTVSGTSTTG) shows a compositional bias: low complexity. 2 stretches are compositionally biased toward basic and acidic residues: residues 49-150 (DLER…RYAD) and 157-166 (DNGKLDDYSD). The segment covering 190-200 (RSKNKVVKAKK) has biased composition (basic residues). Over residues 201–225 (GGRDDENGNKNERQSDRRNQKDVKG) the composition is skewed to basic and acidic residues. A tr-type G domain is found at 330-500 (HRAPVVTIMG…LLQSEVLELT (171 aa)). The segment at 339-346 (GHVDHGKT) is G1. Residue 339 to 346 (GHVDHGKT) coordinates GTP. A G2 region spans residues 364 to 368 (GITQH). Residues 386–389 (DTPG) are G3. GTP-binding positions include 386–390 (DTPGH) and 440–443 (NKID). The interval 440-443 (NKID) is G4. Positions 476–478 (SAK) are G5.

Belongs to the TRAFAC class translation factor GTPase superfamily. Classic translation factor GTPase family. IF-2 subfamily.

Its subcellular location is the cytoplasm. In terms of biological role, one of the essential components for the initiation of protein synthesis. Protects formylmethionyl-tRNA from spontaneous hydrolysis and promotes its binding to the 30S ribosomal subunits. Also involved in the hydrolysis of GTP during the formation of the 70S ribosomal complex. The protein is Translation initiation factor IF-2 of Histophilus somni (strain 2336) (Haemophilus somnus).